The sequence spans 98 residues: Small ribosomal subunit protein uS19 (98 aa).

Positions F74 to K98 are disordered.

The protein belongs to the universal ribosomal protein uS19 family.

Its function is as follows. Protein S19 forms a complex with S13 that binds strongly to the 16S ribosomal RNA. In Chlorobium chlorochromatii (strain CaD3), this protein is Small ribosomal subunit protein uS19.